The sequence spans 227 residues: Iron-regulated surface determinant protein C (227 aa).

An N-terminal signal peptide occupies residues 1-28; the sequence is MKNILKVFNTTILALIIIIATFSNSANA. The NEAT domain occupies 29-150; the sequence is ADSGTLNYEV…KFNGPTDVAG (122 aa). Heme is bound by residues Ser-47, Ile-48, Tyr-132, and Tyr-136. Positions 149-191 are disordered; it reads AGANAPGKDDKNSASGSDKGSDGTTTGQSESNSSNKDKVENPQ. The segment covering 161-175 has biased composition (low complexity); that stretch reads SASGSDKGSDGTTTG. The NPQTN sorting signal signature appears at 189–193; the sequence is NPQTN. Thr-192 carries the pentaglycyl murein peptidoglycan amidated threonine modification. Residues 193 to 227 constitute a propeptide, removed by sortase B; that stretch reads NAGTPAYIYAIPVASLALLIAITLFVRKKSKGNVE.

It belongs to the IsdC family. Monomer. Interacts with IsdA.

It localises to the secreted. The protein resides in the cell wall. Functionally, involved in heme (porphyrin) scavenging. Binds hemoglobin and almost exclusively free-base protoporphyrin IX. Probably has a role as the central conduit of the isd heme uptake system, i.e. mediates the transfer of the iron-containing nutrient from IsdABH to the membrane translocation system IsdDEF. Hemin-free IsdC (apo-IsdC) acquires hemin from hemin-containing IsdA (holo-IsdA) probably through the activated holo-IsdA-apo-IsdC complex and due to the higher affinity of apo-IsdC for the cofactor. The reaction is reversible. This chain is Iron-regulated surface determinant protein C (isdC), found in Staphylococcus aureus (strain Mu3 / ATCC 700698).